Reading from the N-terminus, the 530-residue chain is Pancreatic secretory granule membrane major glycoprotein GP2 (530 aa).

The signal sequence occupies residues 1–21 (MVACDLLWLAAASCLLTLVFP). N-linked (GlcNAc...) asparagine glycosylation is present at Asn33. Disulfide bonds link Cys41/Cys52, Cys56/Cys150, Cys78/Cys168, Cys100/Cys138, Cys106/Cys173, Cys131/Cys139, Cys183/Cys193, Cys187/Cys202, Cys204/Cys234, Cys222/Cys313, and Cys254/Cys277. The interval 54–74 (DPCQNHTVLNDPSRSTENTVS) is D10C. Asn58 and Asn127 each carry an N-linked (GlcNAc...) asparagine glycan. An EGF-like domain is found at 179-223 (APKKCEIACRPEEECVFQNNSWTCVCRQDLNVSDTLSLQPLLDCG). N-linked (GlcNAc...) asparagine glycosylation is found at Asn197 and Asn209. The interval 221–314 (DCGANEIKVK…FLVNVNFQCA (94 aa)) is ZP-N. Residues 221-477 (DCGANEIKVK…PSCSTSRLRS (257 aa)) form the ZP domain. Asn284 and Asn320 each carry an N-linked (GlcNAc...) asparagine glycan. Residues 315-338 (YPLDMNVSLQTALQPIVSSLNVDV) are flexible ZP-N/ZP-C linker. The segment at 339-350 (GGAGEFTVTMAL) is internal hydrophobic patch (IHP). Positions 339-477 (GGAGEFTVTM…PSCSTSRLRS (139 aa)) are ZP-C. Intrachain disulfides connect Cys394/Cys454, Cys415/Cys470, and Cys459/Cys466. The external hydrophobic patch (EHP) stretch occupies residues 484 to 492 (LTRVLDIGP). Asn505 carries the GPI-anchor amidated asparagine lipid modification. Positions 506 to 530 (GTPRNTGFLLAWPTFFLPVFLAWLF) are cleaved as a propeptide — removed in mature form.

As to quaternary structure, interacts with SYCN. Interacts with bacterial adhesin fimH. Post-translationally, N-glycosylated. In terms of tissue distribution, expressed in pancreas.

The protein resides in the zymogen granule membrane. The protein localises to the secreted. Its subcellular location is the cell membrane. It localises to the apical cell membrane. It is found in the membrane raft. The protein resides in the endosome. Functions as an intestinal M-cell transcytotic receptor specific of type-I-piliated bacteria that participates in the mucosal immune response toward these bacteria. At the apical membrane of M-cells it binds fimH, a protein of the bacteria type I pilus tip. Internalizes bound bacteria, like E.coli and S.typhimurium, from the lumen of the intestine and delivers them, through M-cells, to the underlying organized lymphoid follicles where they are captured by antigen-presenting dendritic cells to elicit a mucosal immune response. This chain is Pancreatic secretory granule membrane major glycoprotein GP2, found in Rattus norvegicus (Rat).